A 113-amino-acid polypeptide reads, in one-letter code: Large ribosomal subunit protein uL22 (113 aa).

The protein belongs to the universal ribosomal protein uL22 family. Part of the 50S ribosomal subunit.

This protein binds specifically to 23S rRNA; its binding is stimulated by other ribosomal proteins, e.g. L4, L17, and L20. It is important during the early stages of 50S assembly. It makes multiple contacts with different domains of the 23S rRNA in the assembled 50S subunit and ribosome. Functionally, the globular domain of the protein is located near the polypeptide exit tunnel on the outside of the subunit, while an extended beta-hairpin is found that lines the wall of the exit tunnel in the center of the 70S ribosome. In Xylella fastidiosa (strain M12), this protein is Large ribosomal subunit protein uL22.